The following is a 428-amino-acid chain: Histidine--tRNA ligase (428 aa).

This sequence belongs to the class-II aminoacyl-tRNA synthetase family. As to quaternary structure, homodimer.

It is found in the cytoplasm. It carries out the reaction tRNA(His) + L-histidine + ATP = L-histidyl-tRNA(His) + AMP + diphosphate + H(+). This Chlamydia muridarum (strain MoPn / Nigg) protein is Histidine--tRNA ligase (hisS).